A 293-amino-acid polypeptide reads, in one-letter code: Digeranylgeranylglyceryl phosphate synthase (293 aa).

7 helical membrane-spanning segments follow: residues 26 to 46, 50 to 70, 107 to 127, 140 to 160, 215 to 235, 237 to 257, and 273 to 293; these read LMYGFGVVIGIYVSDPFFSDL, LLGYLTAVFLQASTFALNDYF, FVAAYLISPLAFIFAFAVSVL, FAGNVYIAFTMAAPFLFGSII, IASLFYLTAVSISPIPLFLLP, FLFDLKYAVPVSVTDVLLIYV, and YRKVTLVAMVLGLVGFFAGAF.

Belongs to the UbiA prenyltransferase family. DGGGP synthase subfamily. The cofactor is Mg(2+).

It is found in the cell membrane. It carries out the reaction sn-3-O-(geranylgeranyl)glycerol 1-phosphate + (2E,6E,10E)-geranylgeranyl diphosphate = 2,3-bis-O-(geranylgeranyl)-sn-glycerol 1-phosphate + diphosphate. It functions in the pathway membrane lipid metabolism; glycerophospholipid metabolism. Prenyltransferase that catalyzes the transfer of the geranylgeranyl moiety of geranylgeranyl diphosphate (GGPP) to the C2 hydroxyl of (S)-3-O-geranylgeranylglyceryl phosphate (GGGP). This reaction is the second ether-bond-formation step in the biosynthesis of archaeal membrane lipids. This chain is Digeranylgeranylglyceryl phosphate synthase, found in Archaeoglobus fulgidus (strain ATCC 49558 / DSM 4304 / JCM 9628 / NBRC 100126 / VC-16).